Here is a 302-residue protein sequence, read N- to C-terminus: Oxygen-dependent coproporphyrinogen-III oxidase (302 aa).

Serine 94 contributes to the substrate binding site. A divalent metal cation contacts are provided by histidine 98 and histidine 108. Residue histidine 108 is the Proton donor of the active site. 110 to 112 (NVR) contacts substrate. Residues histidine 147 and histidine 177 each coordinate a divalent metal cation. The tract at residues 242–277 (YVEFNLVYDRGTLFGLQTGGRTESILMSMPPLARWE) is important for dimerization. 260–262 (GGR) is a substrate binding site.

The protein belongs to the aerobic coproporphyrinogen-III oxidase family. As to quaternary structure, homodimer. A divalent metal cation serves as cofactor.

It localises to the cytoplasm. The enzyme catalyses coproporphyrinogen III + O2 + 2 H(+) = protoporphyrinogen IX + 2 CO2 + 2 H2O. The protein operates within porphyrin-containing compound metabolism; protoporphyrin-IX biosynthesis; protoporphyrinogen-IX from coproporphyrinogen-III (O2 route): step 1/1. Functionally, involved in the heme biosynthesis. Catalyzes the aerobic oxidative decarboxylation of propionate groups of rings A and B of coproporphyrinogen-III to yield the vinyl groups in protoporphyrinogen-IX. This chain is Oxygen-dependent coproporphyrinogen-III oxidase, found in Aeromonas hydrophila subsp. hydrophila (strain ATCC 7966 / DSM 30187 / BCRC 13018 / CCUG 14551 / JCM 1027 / KCTC 2358 / NCIMB 9240 / NCTC 8049).